We begin with the raw amino-acid sequence, 253 residues long: 5'/3'-nucleotidase SurE (253 aa).

The a divalent metal cation site is built by Asp8, Asp9, Ser39, and Asn92.

It belongs to the SurE nucleotidase family. A divalent metal cation serves as cofactor.

The protein localises to the cytoplasm. It catalyses the reaction a ribonucleoside 5'-phosphate + H2O = a ribonucleoside + phosphate. The catalysed reaction is a ribonucleoside 3'-phosphate + H2O = a ribonucleoside + phosphate. It carries out the reaction [phosphate](n) + H2O = [phosphate](n-1) + phosphate + H(+). Its function is as follows. Nucleotidase with a broad substrate specificity as it can dephosphorylate various ribo- and deoxyribonucleoside 5'-monophosphates and ribonucleoside 3'-monophosphates with highest affinity to 3'-AMP. Also hydrolyzes polyphosphate (exopolyphosphatase activity) with the preference for short-chain-length substrates (P20-25). Might be involved in the regulation of dNTP and NTP pools, and in the turnover of 3'-mononucleotides produced by numerous intracellular RNases (T1, T2, and F) during the degradation of various RNAs. The polypeptide is 5'/3'-nucleotidase SurE (Sodalis glossinidius (strain morsitans)).